The primary structure comprises 263 residues: Thiamine thiazole synthase (263 aa).

NAD(+) is bound by residues serine 36, 55-56 (ER), glycine 63, valine 127, and 157-159 (HVD). Fe cation-binding residues include aspartate 159 and histidine 174. Methionine 228 serves as a coordination point for NAD(+). Arginine 238 serves as a coordination point for glycine.

It belongs to the THI4 family. Homooctamer; tetramer of dimers. Requires Fe(2+) as cofactor.

The enzyme catalyses hydrogen sulfide + glycine + NAD(+) = ADP-5-ethyl-4-methylthiazole-2-carboxylate + nicotinamide + 3 H2O + H(+). Its pathway is cofactor biosynthesis; thiamine diphosphate biosynthesis. In terms of biological role, involved in the biosynthesis of the thiazole moiety of thiamine. Catalyzes the conversion of NAD and glycine to adenosine diphosphate 5-(2-hydroxyethyl)-4-methylthiazole-2-carboxylate (ADT), an adenylated thiazole intermediate, using free sulfide as a source of sulfur. This is Thiamine thiazole synthase from Solidesulfovibrio magneticus (strain ATCC 700980 / DSM 13731 / RS-1) (Desulfovibrio magneticus).